The primary structure comprises 715 residues: ATP-dependent DNA helicase Hel308 (715 aa).

The Q motif motif lies at 8-36; it reads MPIEDLKLPSNVIEIIKKRGIKKLNPPQT. ATP contacts are provided by residues Gln35 and 53–60; that span reads SPTGSGKT. One can recognise a Helicase ATP-binding domain in the interval 40 to 203; sequence KKGLLEGNRL…WLGAEPVATN (164 aa). Positions 152-155 match the DEAH box motif; that stretch reads DELH. Positions 236 to 442 constitute a Helicase C-terminal domain; it reads HGDDAIIAYT…ERAFYTFLLG (207 aa).

The protein belongs to the helicase family. Hel308 subfamily. Monomer.

It catalyses the reaction Couples ATP hydrolysis with the unwinding of duplex DNA by translocating in the 3'-5' direction.. The catalysed reaction is ATP + H2O = ADP + phosphate + H(+). Functionally, DNA-dependent ATPase and 3'-5' DNA helicase that may be involved in repair of stalled replication forks. A low processivity 3'-5' helicase. Unwinds short dsDNA substrates with 3'-overhangs (25 bp dsDNA with 25 base overhang), less active on longer dsDNA substrates. Also unwinds the lagging strand of a stalled replication fork (but the leading strand was not tested). Binds ssDNA, but dsDNA about 35-fold less well. Able to displace streptavidin from biotinylated ssDNA, which is partially inhibited by DNA-binding proteins, suggesting it may play a role in stripping proteins from stalled replication forks. In Saccharolobus solfataricus (strain 98/2) (Sulfolobus solfataricus), this protein is ATP-dependent DNA helicase Hel308.